A 158-amino-acid polypeptide reads, in one-letter code: Major latex protein 22 (158 aa).

It belongs to the MLP family. As to expression, laticifer.

Its subcellular location is the vacuole. The protein resides in the cytoplasmic vesicle. In terms of biological role, not known; MLPs constitute up to 50% of the soluble latex protein. In Papaver somniferum (Opium poppy), this protein is Major latex protein 22 (MLP22).